We begin with the raw amino-acid sequence, 651 residues long: Apical membrane antigen 1-like protein (651 aa).

The signal sequence occupies residues 1-41; it reads MPTESRSILARAEETRCRHLSRLLRAGLVFLLCDVLTSCLA. The propeptide at 42 to 81 is removed in mature form; that stretch reads TPELQNTVIRSSKAHHLQLLFSSRSTPAVKFPLDATLSAP. Over 42–570 the chain is Extracellular; that stretch reads TPELQNTVIR…VEKEGSGGNT (529 aa). Intrachain disulfides connect Cys141/Cys309, Cys215/Cys248, Cys264/Cys277, Cys327/Cys417, Cys347/Cys408, Cys441/Cys463, and Cys453/Cys475. N-linked (GlcNAc...) asparagine glycosylation occurs at Asn230. The 1; approximate repeat unit spans residues 483-486; that stretch reads PPVK. The segment at 483 to 531 is 12 x 4 AA approximate tandem-repeats of P-P-V-E; the sequence is PPVKPPVEPPVEPPVEPPVEPPVEPPVEPPVEPPVEPPVEPPVVEPPTE. Pro residues predominate over residues 483 to 547; the sequence is PPVKPPVEPP…EPPVVLPPTP (65 aa). Residues 483–567 are disordered; it reads PPVKPPVEPP…DETVEKEGSG (85 aa). 9 tandem repeats follow at residues 487–490, 491–494, 495–498, 499–502, 503–506, 507–510, 511–514, 515–518, and 519–522. The 11; approximate repeat unit spans residues 523 to 527; it reads PPVVE. Residues 528 to 531 form a 12; approximate repeat; sequence PPTE. Residues 571–591 traverse the membrane as a helical segment; the sequence is ALIAGSVLGMLIILALVGTCV. Over 592–651 the chain is Cytoplasmic; the sequence is GFYYRKRPLPPTERPTVEASGGREVEGPSDVAVPPDHSWWGEGEHETESLLGSRAVDAEF. The disordered stretch occupies residues 598-651; that stretch reads RPLPPTERPTVEASGGREVEGPSDVAVPPDHSWWGEGEHETESLLGSRAVDAEF.

The protein belongs to the apicomplexan parasites AMA1 family. Post-translationally, proteolytically cleaved within its transmembrane domain, releasing a soluble form from the cell surface.

Its subcellular location is the cell membrane. It localises to the secreted. May play a role in host cell invasion. This chain is Apical membrane antigen 1-like protein, found in Toxoplasma gondii (strain ATCC 50861 / VEG).